The chain runs to 713 residues: Macrophage-expressed gene 1 protein (713 aa).

The first 19 residues, 1-19, serve as a signal peptide directing secretion; it reads MNSFMALVLIWMIIACAEA. The region spanning 30–345 is the MACPF domain; sequence GFQICKNALK…TAVRHYYTFN (316 aa). Cysteines 34 and 70 form a disulfide. Transmembrane regions (beta stranded) follow at residues 113-120 and 127-132; these read LSINTELA and GKFSTE. A glycan (N-linked (GlcNAc...) asparagine) is linked at Asn185. Beta stranded transmembrane passes span 235–244 and 248–256; these read TVTASAGIAF and VNFKVETDY. N-linked (GlcNAc...) asparagine glycosylation occurs at Asn269. Cys350 and Cys369 form a disulfide bridge. The N-linked (GlcNAc...) asparagine glycan is linked to Asn375. Disulfide bonds link Cys385–Cys394, Cys432–Cys446, Cys436–Cys442, Cys531–Cys569, and Cys554–Cys574. Positions 410–653 are P2; it reads PPGYSPVHLL…GDSNGMSGGE (244 aa). The helical transmembrane segment at 654–674 threads the bilayer; it reads AAGITLGVTIALGIVITLAIY.

It belongs to the MPEG1 family. As to quaternary structure, homooligomer; predominantly forms a homooligomeric arc-shaped pore complex instead of complete rings of 16 subunits. Post-translationally, proteolytically processed in two steps to generate the Macrophage-expressed gene 1 protein, processed form: cleaved by trypsin in proximity of the helical transmembrane domain releases the ectodomain into the lysosomal lumen to orient the pore-forming domain toward the endogenous membranes, and processed by the asparagine endopeptidase (LGMN). Proteolytic processing in antigen-containing vesicles is pH-dependent. Monoubiquitinated in response to bacterial infection; ubiquitination is required for vesicular localization and antibacterial activity and can be blocked by bacterial cell cycle inhibiting factor (cif). Expressed constitutively in a variety of cell types including macrophages, microglia, neutrophils, T cells, marginal zone B cells, keratinocytes, splenocytes and intestinal epithelial cells.

It is found in the cytoplasmic vesicle membrane. The protein resides in the cytoplasmic vesicle. It localises to the phagosome membrane. Its activity is regulated as follows. Forms arc- and ring-shaped pre-pores on top of the membrane at neutral to slightly acidic pH conditions and converts to pores upon acidification. Undergoes transition from the pre-pore to the pore in a processive clockwise hand-over-hand process. In the pore state, 2 alpha-helical regions refold into transmembrane hairpins (TMH1 and TMH2) in each protomer that form in the ensemble complex giant beta-barrel transmembrane pores. Functionally, pore-forming protein involved in both innate and adaptive immunity. Plays a central role in antigen cross-presentation in dendritic cells by forming a pore in antigen-containing compartments, thereby promoting delivery of antigens for cross-presentation. Also involved in innate immune response following bacterial infection; shows antibacterial activity against a wide spectrum of Gram-positive, Gram-negative and acid-fast bacteria. Reduces the viability of the intracytosolic pathogen L.monocytogenes by inhibiting acidification of the phagocytic vacuole of host cells which restricts bacterial translocation from the vacuole to the cytosol. Required for the antibacterial activity of reactive oxygen species and nitric oxide. In terms of biological role, pore-forming protein that plays a central role in antigen cross-presentation in dendritic cells by mediating delivery of antigens for cross-presentation. Dendritic cells bridge innate and adaptive immunity by capturing exogenous antigens on MHC class-I molecules and presenting them to naive CD8(+) T-cells. Acts by forming a pore in antigen-containing compartments, promoting the release of antigens into the cytosol, enabling generation of MHCI:peptide complexes and T-cell priming. This Mus musculus (Mouse) protein is Macrophage-expressed gene 1 protein.